The chain runs to 161 residues: Putative defense protein 2 (161 aa).

Positions 1–11 (LSWSALALTSA) are cleaved as a signal peptide. Positions 12 to 161 (YPTGAPTSAC…SAPVKILSHH (150 aa)) constitute a Reelin domain. Cysteines 21 and 98 form a disulfide. N-linked (GlcNAc...) asparagine glycosylation is present at Asn-91.

The protein belongs to the insect defense protein family.

The protein localises to the secreted. Functionally, may have antimicrobial activity. The polypeptide is Putative defense protein 2 (Antheraea mylitta (Tasar silkworm)).